A 176-amino-acid chain; its full sequence is Peptide deformylase (176 aa).

Positions 97 and 139 each coordinate Fe cation. Residue glutamate 140 is part of the active site. Histidine 143 contacts Fe cation.

Belongs to the polypeptide deformylase family. Fe(2+) serves as cofactor.

It catalyses the reaction N-terminal N-formyl-L-methionyl-[peptide] + H2O = N-terminal L-methionyl-[peptide] + formate. In terms of biological role, removes the formyl group from the N-terminal Met of newly synthesized proteins. Requires at least a dipeptide for an efficient rate of reaction. N-terminal L-methionine is a prerequisite for activity but the enzyme has broad specificity at other positions. The protein is Peptide deformylase of Thermomicrobium roseum (strain ATCC 27502 / DSM 5159 / P-2).